The chain runs to 201 residues: Histone-like protein HC2 (201 aa).

The segment at 1–69 (MLGVQKKCST…VAKKATAKKA (69 aa)) is disordered. Composition is skewed to basic residues over residues 8–50 (CSTR…KTVA) and 59–69 (PVAKKATAKKA).

This sequence belongs to the histone H1/H5 family. HCT subfamily.

In terms of biological role, might have a role in establishing the nucleoid structure of elementary bodies. This is Histone-like protein HC2 (hctB) from Chlamydia trachomatis serovar D (strain ATCC VR-885 / DSM 19411 / UW-3/Cx).